Reading from the N-terminus, the 201-residue chain is Large ribosomal subunit protein uL18 (201 aa).

This sequence belongs to the universal ribosomal protein uL18 family. Part of the 50S ribosomal subunit. Contacts the 5S and 23S rRNAs.

This is one of the proteins that bind and probably mediate the attachment of the 5S RNA into the large ribosomal subunit, where it forms part of the central protuberance. This Thermococcus kodakarensis (strain ATCC BAA-918 / JCM 12380 / KOD1) (Pyrococcus kodakaraensis (strain KOD1)) protein is Large ribosomal subunit protein uL18.